Reading from the N-terminus, the 328-residue chain is MIEKIWSGESPLWRLLLPLSWLYGLVSGAIRLCYKLKLKRAWRAPVPVVVVGNLTAGGNGKTPVVVWLVEQLQQRGIRVGVVSRGYGGKAESYPLLLSADTTTAQAGDEPVLIYQRTGAPVAVSPVRSDAVKAILAQHPDVQIIVTDDGLQHYRLARDVEIVVIDGVRRFGNGWWLPAGSMRERAGRLKSVDAVIVNGGVPRSGEIPMHLLPGQAVNLRTGTRCDVAQLEHVVAIAGIGHPPRFFATLKMCGVQPEKCVPLADHQSLNHADVSALVSAGQTLVMTEKDAVKCRAFAEENWWYLPVDAQLSGDEPAKLLAQLTSLASGH.

T55–T62 provides a ligand contact to ATP.

Belongs to the LpxK family.

It carries out the reaction a lipid A disaccharide + ATP = a lipid IVA + ADP + H(+). It participates in glycolipid biosynthesis; lipid IV(A) biosynthesis; lipid IV(A) from (3R)-3-hydroxytetradecanoyl-[acyl-carrier-protein] and UDP-N-acetyl-alpha-D-glucosamine: step 6/6. Functionally, transfers the gamma-phosphate of ATP to the 4'-position of a tetraacyldisaccharide 1-phosphate intermediate (termed DS-1-P) to form tetraacyldisaccharide 1,4'-bis-phosphate (lipid IVA). This is Tetraacyldisaccharide 4'-kinase from Escherichia coli O127:H6 (strain E2348/69 / EPEC).